We begin with the raw amino-acid sequence, 550 residues long: Solute carrier family 22 member 6 (550 aa).

The Cytoplasmic segment spans residues 1–9 (MAFNDLLQQ). The helical transmembrane segment at 10–30 (VGGVGRFQQIQVTLVVLPLLL) threads the bilayer. Over 31-135 (MASHNTLQNF…LVCSHRALRQ (105 aa)) the chain is Extracellular. Asn-39, Asn-92, and Asn-113 each carry an N-linked (GlcNAc...) asparagine glycan. Residues 136-156 (LAQSLYMVGVLLGAMVFGYLA) form a helical membrane-spanning segment. The Cytoplasmic portion of the chain corresponds to 157–164 (DRLGRRKV). Residues 165–187 (LILNYLQTAVSGTCTAFAPNFSI) form a helical membrane-spanning segment. Residues 188 to 195 (YCAFRLLS) are Extracellular-facing. A helical membrane pass occupies residues 196-216 (GMSLAGISLNCMTLNVEWMPI). The Cytoplasmic portion of the chain corresponds to 217 to 224 (HTRACVGT). A helical membrane pass occupies residues 225 to 245 (LIGYVYSLGQFLLAGVAYAVP). The Extracellular segment spans residues 246 to 248 (HWR). Residues 249–269 (HLQLLVSAPFFAFFIYSWFFI) traverse the membrane as a helical segment. Residues 270-337 (ESARWHSSSG…ELLRCPTLRH (68 aa)) are Cytoplasmic-facing. A helical membrane pass occupies residues 338-358 (LFLCLSMLWFATSFAYYGLVM). At 359-368 (DLQGFGVSIY) the chain is on the extracellular side. The helical transmembrane segment at 369-389 (LIQVIFGAVDLPAKLVGFLVI) threads the bilayer. Topologically, residues 390–395 (NSLGRR) are cytoplasmic. A helical membrane pass occupies residues 396 to 416 (PAQMAALLLAGICILLNGVIP). The Extracellular segment spans residues 417–420 (QDQS). Residues 421 to 444 (IVRTSLAVPGKGCLAASFNCIFLY) form a helical membrane-spanning segment. Residues 445-455 (TGELYPTMIRQ) are Cytoplasmic-facing. The chain crosses the membrane as a helical span at residues 456–475 (TGMGMGSTMARVGSIVSPLV). Over 476-484 (SMTAELYPS) the chain is Extracellular. A helical transmembrane segment spans residues 485–505 (MPLFIYGAVPVAASAVTVLLP). The Cytoplasmic portion of the chain corresponds to 506–550 (ETLGQPLPDTVQDLESRKGKQTRQQQEHQKYMVPLQASAQEKNGL). A disordered region spans residues 514-550 (DTVQDLESRKGKQTRQQQEHQKYMVPLQASAQEKNGL).

It belongs to the major facilitator (TC 2.A.1) superfamily. Organic cation transporter (TC 2.A.1.19) family. Post-translationally, glycosylated. Glycosylation is necessary for proper targeting of the transporter to the plasma membrane.

The protein resides in the cell membrane. It carries out the reaction prostaglandin F2alpha(out) = prostaglandin F2alpha(in). It catalyses the reaction prostaglandin E2(out) = prostaglandin E2(in). Involved in the renal elimination of endogenous and exogenous organic anions. Functions as organic anion exchanger when the uptake of one molecule of organic anion is coupled with an efflux of one molecule of endogenous dicarboxylic acid (glutarate, ketoglutarate, etc). Mediates the transport of prostaglandin E2 (PGE2) and prostaglandin F2-alpha (PGF2-alpha) and may be involved in their renal excretion. Also mediates the sodium-independent uptake of p-aminohippurate (PAH), 2,3-dimercapto-1-propanesulfonic acid (DMPS), cidofovir, adefovir, 9-(2-phosphonylmethoxyethyl) guanine (PMEG), 9-(2-phosphonylmethoxyethyl) diaminopurine (PMEDAP), ochratoxin (OTA), acyclovir (ACV), 3'-azido-3-'deoxythymidine (AZT), cimetidine (CMD), 2,4-dichloro-phenoxyacetate (2,4-D), hippurate (HA), indoleacetate (IA), indoxyl sulfate (IS) and 3-carboxy-4-methyl-5-propyl-2-furanpropionate (CMPF) and edaravone sulfate. PAH uptake is inhibited by p-chloromercuribenzenesulphonate (PCMBS), diethyl pyrocarbonate (DEPC), indomethacin, sulindac, diclofenac, carprofen, okadaic acid, benzothiazolylcysteine (BTC), S-chlorotrifluoroethylcysteine (CTFC), cysteine S-conjugates S-dichlorovinylcysteine (DCVC), furosemide, steviol, phorbol 12-myristate 13-acetate (PMA), calcium ionophore A23187, benzylpenicillin, bumetamide, losartan, probenecid, phenol red, urate, glutarate and alpha-ketoglutarate. The chain is Solute carrier family 22 member 6 (SLC22A6) from Pongo abelii (Sumatran orangutan).